The chain runs to 423 residues: Gamma-glutamyl phosphate reductase (423 aa).

It belongs to the gamma-glutamyl phosphate reductase family.

It localises to the cytoplasm. The catalysed reaction is L-glutamate 5-semialdehyde + phosphate + NADP(+) = L-glutamyl 5-phosphate + NADPH + H(+). It participates in amino-acid biosynthesis; L-proline biosynthesis; L-glutamate 5-semialdehyde from L-glutamate: step 2/2. Its function is as follows. Catalyzes the NADPH-dependent reduction of L-glutamate 5-phosphate into L-glutamate 5-semialdehyde and phosphate. The product spontaneously undergoes cyclization to form 1-pyrroline-5-carboxylate. The sequence is that of Gamma-glutamyl phosphate reductase from Burkholderia orbicola (strain AU 1054).